Reading from the N-terminus, the 197-residue chain is ATP-dependent Clp protease proteolytic subunit (197 aa).

Residue serine 98 is the Nucleophile of the active site. Histidine 123 is an active-site residue.

Belongs to the peptidase S14 family. As to quaternary structure, fourteen ClpP subunits assemble into 2 heptameric rings which stack back to back to give a disk-like structure with a central cavity, resembling the structure of eukaryotic proteasomes.

It localises to the cytoplasm. It catalyses the reaction Hydrolysis of proteins to small peptides in the presence of ATP and magnesium. alpha-casein is the usual test substrate. In the absence of ATP, only oligopeptides shorter than five residues are hydrolyzed (such as succinyl-Leu-Tyr-|-NHMec, and Leu-Tyr-Leu-|-Tyr-Trp, in which cleavage of the -Tyr-|-Leu- and -Tyr-|-Trp bonds also occurs).. Cleaves peptides in various proteins in a process that requires ATP hydrolysis. Has a chymotrypsin-like activity. Plays a major role in the degradation of misfolded proteins. In Limosilactobacillus reuteri (strain DSM 20016) (Lactobacillus reuteri), this protein is ATP-dependent Clp protease proteolytic subunit.